Consider the following 204-residue polypeptide: MSIFEYNGSAVVAMVGKNCFAIASDRRLGVQLQTIATDFQRISKIHDHLFIGLSGLATDVQTLYQRLVFRHKLYQLREERDMKPETFASLVSAILYEKRFGPFLCQPVIAGLGDDNKPFICTMDSIGAKELAKDFVVSGTASESLYGACEAMFKPDMEAEELFETISQALLSSVDRDCLSGWGGHVYVVTPKEVKERILKGRMD.

Belongs to the peptidase T1B family. In terms of assembly, component of the 20S core complex of the 26S proteasome. The 26S proteasome is composed of a core protease (CP), known as the 20S proteasome, capped at one or both ends by the 19S regulatory particle (RP/PA700). The 20S proteasome core is composed of 28 subunits that are arranged in four stacked rings, resulting in a barrel-shaped structure. The two end rings are each formed by seven alpha subunits, and the two central rings are each formed by seven beta subunits. The catalytic chamber with the active sites is on the inside of the barrel.

It is found in the cytoplasm. The protein resides in the nucleus. In terms of biological role, non-catalytic component of the proteasome, a multicatalytic proteinase complex which is characterized by its ability to cleave peptides with Arg, Phe, Tyr, Leu, and Glu adjacent to the leaving group at neutral or slightly basic pH. The proteasome has an ATP-dependent proteolytic activity. This is Proteasome subunit beta type-3-B (PBC2) from Arabidopsis thaliana (Mouse-ear cress).